The sequence spans 433 residues: Adenylosuccinate synthetase (433 aa).

GTP contacts are provided by residues 13 to 19 (GDEGKGK) and 41 to 43 (GHT). The active-site Proton acceptor is the D14. Positions 14 and 41 each coordinate Mg(2+). IMP is bound by residues 14–17 (DEGK), 39–42 (NAGH), T130, R144, Q225, T240, and R304. The active-site Proton donor is the H42. 300-306 (STTGRKR) is a binding site for substrate. Residues R306, 332–334 (KLD), and 414–416 (STG) each bind GTP.

It belongs to the adenylosuccinate synthetase family. As to quaternary structure, homodimer. The cofactor is Mg(2+).

Its subcellular location is the cytoplasm. It carries out the reaction IMP + L-aspartate + GTP = N(6)-(1,2-dicarboxyethyl)-AMP + GDP + phosphate + 2 H(+). The protein operates within purine metabolism; AMP biosynthesis via de novo pathway; AMP from IMP: step 1/2. Plays an important role in the de novo pathway of purine nucleotide biosynthesis. Catalyzes the first committed step in the biosynthesis of AMP from IMP. The chain is Adenylosuccinate synthetase from Buchnera aphidicola subsp. Acyrthosiphon pisum (strain APS) (Acyrthosiphon pisum symbiotic bacterium).